A 283-amino-acid chain; its full sequence is Glutamate racemase (283 aa).

Residues aspartate 7 to serine 8 and tyrosine 39 to glycine 40 contribute to the substrate site. The active-site Proton donor/acceptor is cysteine 70. Asparagine 71–threonine 72 is a binding site for substrate. Cysteine 206 serves as the catalytic Proton donor/acceptor. Substrate is bound at residue threonine 207–histidine 208.

The protein belongs to the aspartate/glutamate racemases family.

It carries out the reaction L-glutamate = D-glutamate. Its pathway is cell wall biogenesis; peptidoglycan biosynthesis. Provides the (R)-glutamate required for cell wall biosynthesis. The protein is Glutamate racemase of Caulobacter sp. (strain K31).